Reading from the N-terminus, the 123-residue chain is Large ribosomal subunit protein uL29 (123 aa).

Belongs to the universal ribosomal protein uL29 family. In terms of assembly, component of the large ribosomal subunit.

It localises to the cytoplasm. Its function is as follows. Component of the large ribosomal subunit. The ribosome is a large ribonucleoprotein complex responsible for the synthesis of proteins in the cell. The sequence is that of Large ribosomal subunit protein uL29 (rpl35) from Hippocampus comes (Tiger tail seahorse).